Here is a 94-residue protein sequence, read N- to C-terminus: Large ribosomal subunit protein uL23 (94 aa).

Belongs to the universal ribosomal protein uL23 family. As to quaternary structure, part of the 50S ribosomal subunit. Contacts protein L29, and trigger factor when it is bound to the ribosome.

In terms of biological role, one of the early assembly proteins it binds 23S rRNA. One of the proteins that surrounds the polypeptide exit tunnel on the outside of the ribosome. Forms the main docking site for trigger factor binding to the ribosome. The protein is Large ribosomal subunit protein uL23 of Geobacter sp. (strain M21).